The primary structure comprises 419 residues: Inward rectifier potassium channel 16 (419 aa).

Residues 1 to 67 (MSYYGSSYRI…MVDIFTTLVD (67 aa)) lie on the Cytoplasmic side of the membrane. A helical membrane pass occupies residues 68–94 (TKWRHMFVIFSLSYILSWLIFGSIFWL). At 95-117 (IAFHHGDLLSDPDITPCVDNVHS) the chain is on the extracellular side. The segment at residues 118–134 (FTAAFLFSLETQTTIGY) is an intramembrane region (helical; Pore-forming). The short motif at 131–136 (TIGYGY) is the Selectivity filter element. Over 135 to 143 (GYRCVTEEC) the chain is Extracellular. A helical membrane pass occupies residues 144-171 (SVAVLTVILQSILSCIINTFIIGAALAK). Topologically, residues 172–419 (MATARKRAQT…LNRISMESQM (248 aa)) are cytoplasmic. Phosphoserine occurs at positions 358, 374, and 376.

The protein belongs to the inward rectifier-type potassium channel (TC 1.A.2.1) family. KCNJ16 subfamily. As to quaternary structure, it forms heteromeric channels with Kir4.1/KCNJ10; this interaction is required for KCNJ16 localization to the basolateral membrane in kidney cells. As a heteromer with KCNJ10, may interact with MAGI1; this interaction may facilitate KCNJ10/KCNJ16 potassium channel expression at the basolateral membrane in kidney cells. May form heteromers with Kir2.1/KCNJ2. Can form heteromeric channels with Kir4.2/KCNJ15. In terms of tissue distribution, abundantly expressed in the proximal and distal segments of the nephron.

It is found in the membrane. The protein localises to the basolateral cell membrane. It carries out the reaction K(+)(in) = K(+)(out). With respect to regulation, channel activity is strongly regulated by variations of cytosolic pH; channels are activated by alkaline and inhibited by acidic pH values. Activated by phosphatidylinositol 4,5 biphosphate (PtdIns(4,5)P2). Functionally, inward rectifier potassium channels are characterized by a greater tendency to allow potassium to flow into the cell rather than out of it. Their voltage dependence is regulated by the concentration of extracellular potassium; as external potassium is raised, the voltage range of the channel opening shifts to more positive voltages. The inward rectification is mainly due to the blockage of outward current by internal magnesium. KCNJ16 may be involved in the regulation of fluid and pH balance. In the kidney, together with KCNJ10, mediates basolateral K(+) recycling in distal tubules; this process is critical for Na(+) reabsorption at the tubules. This Mus musculus (Mouse) protein is Inward rectifier potassium channel 16 (Kcnj16).